The following is a 383-amino-acid chain: MTEFWLISAPGEKTCQQTWDKLMTATTRTNNLSTNNKFNIPDLKVGTLDVLVGLSDELAKLDAFVESVVKKVAQYMADVLEDSRDKVQENLLANGVDLVTYVTRFQWDMAKYPIKQSLKNISEIISKQVSQIDNDLKARASAYNNLKGNLQNLERKNAGSLLTRSLADIVKKDDFVLDSEYLITLLVVVPKTNYTDWQRTYETLAEMVVPRSTNLLFEDHDSGLFTVTLFRKAIDDFRHKARENKFTVRDFQYNEEEMKADKEEMTRLSTDKKKQFGPLVRWLKVNFSEAFIAWVHIKALRVFVESVLRYGLPVNFQAMLLQPNKKNMKKLREVLYDLYKHLDSSAAAIIDQSAMDIPGLNLSQQEYYPYVYYKIDCNLLDFK.

Position 2 is an N-acetylthreonine (T2).

It belongs to the V-ATPase C subunit family. V-ATPase is a heteromultimeric enzyme made up of two complexes: the ATP-hydrolytic V1 complex and the proton translocation V0 complex. The V1 complex consists of three catalytic AB heterodimers that form a heterohexamer, three peripheral stalks each consisting of EG heterodimers, one central rotor including subunits D and F, and the regulatory subunits C and H. The proton translocation complex V0 consists of the proton transport subunit a, a ring of proteolipid subunits c9c'', rotary subunit d, subunits e and f, and two accessory subunits.

Functionally, subunit of the V1 complex of vacuolar(H+)-ATPase (V-ATPase), a multisubunit enzyme composed of a peripheral complex (V1) that hydrolyzes ATP and a membrane integral complex (V0) that translocates protons. V-ATPase is responsible for acidifying and maintaining the pH of intracellular compartments and in some cell types, is targeted to the plasma membrane, where it is responsible for acidifying the extracellular environment. Subunit C is necessary for the assembly of the catalytic sector of the enzyme and is likely to have a specific function in its catalytic activity. The chain is V-type proton ATPase subunit C 1-A (atp6v1c1a) from Danio rerio (Zebrafish).